Reading from the N-terminus, the 567-residue chain is Zinc finger protein 512 (567 aa).

The disordered stretch occupies residues 1-34 (MSSRLGAVPATPGPTPFKQQRSTRIVGAKNSRTQ). Glycyl lysine isopeptide (Lys-Gly) (interchain with G-Cter in SUMO2) cross-links involve residues K18 and K84. Residues 87–148 (AASHVEGPGG…QTRRIRKEPP (62 aa)) are disordered. Over residues 119–130 (KKHKLYGRKQRP) the composition is skewed to basic residues. The C2H2-type 1 zinc finger occupies 197 to 220 (FTCHHCGKQLRSLAGMKYHVMANH). K227 participates in a covalent cross-link: Glycyl lysine isopeptide (Lys-Gly) (interchain with G-Cter in SUMO2). A C2H2-type 2 zinc finger spans residues 287–310 (LKCHHCGKPYRSKAGLAYHLRSEH). K333 participates in a covalent cross-link: Glycyl lysine isopeptide (Lys-Gly) (interchain with G-Cter in SUMO2). The segment at 406–430 (IQCPNQGCEAVYSSVSGLKAHLGSC) adopts a C2H2-type 3; atypical zinc-finger fold. Residues 440 to 463 (YKCLLCQKEFVSESGVKYHINSVH) form a C2H2-type 3 zinc finger. Positions 485-494 (KQRQQEEEKR) are enriched in basic and acidic residues. The segment at 485–567 (KQRQQEEEKR…PKTNHKRGKK (83 aa)) is disordered. Residues 495 to 508 (RQQHRSRRSLRRRQ) show a composition bias toward basic residues. The span at 523–544 (VGKDQRRNHEELLVATSRKEPE) shows a compositional bias: basic and acidic residues. The span at 556 to 567 (RSPKTNHKRGKK) shows a compositional bias: basic residues.

This sequence belongs to the krueppel C2H2-type zinc-finger protein family.

The protein localises to the nucleus. Its function is as follows. May be involved in transcriptional regulation. In Bos taurus (Bovine), this protein is Zinc finger protein 512 (ZNF512).